A 912-amino-acid polypeptide reads, in one-letter code: Alpha-actinin-4 (912 aa).

An actin-binding region spans residues 1-267; that stretch reads MVDYHAANQA…IMTYVSSFYH (267 aa). The interval 12-27 is interaction with VCL; the sequence is QYGPNSGGGNGAGGGG. Positions 12-31 are disordered; that stretch reads QYGPNSGGGNGAGGGGSMGD. Residues 16–29 show a composition bias toward gly residues; sequence NSGGGNGAGGGGSM. Y32 carries the post-translational modification Phosphotyrosine. Positions 41 to 62 are interaction with VCL; the sequence is RDLLLDPAWEKQQRKTFTAWCN. 2 consecutive Calponin-homology (CH) domains span residues 51-155 and 164-270; these read KQQR…LRFA and TSAK…HAFS. The short motif at 85-89 is the LXXLL motif element; it reads LMLLL. Positions 109 to 127 are interaction with VCL; that stretch reads KINNVNKALDFIASKGVKL. At K115 the chain carries N6-acetyllysine. Positions 178 to 193 are polyphosphoinositide (PIP2)-binding; that stretch reads TAPYKNVNVQNFHISW. K215 bears the N6-acetyllysine mark. T250 is subject to Phosphothreonine. 4 Spectrin repeats span residues 294 to 404, 414 to 519, 529 to 640, and 650 to 753; these read HLME…WLLN, HLAE…ALEK, QLHL…ALLE, and HLRR…EVEN. An N6-acetyllysine mark is found at K593 and K626. At S697 the chain carries Phosphoserine. The mediates interaction with MICALL2 stretch occupies residues 737–912; the sequence is WEQLLTTIAR…STALYGESDL (176 aa). EF-hand domains are found at residues 766 to 801 and 807 to 842; these read EQMQEFRASFNHFDKDHGGALGPEEFKACLISLGYD and QGDAEFNRIMSVVDPNHSGLVTFQAFIDFMSRETTD. Residue D779 coordinates Ca(2+). At K780 the chain carries N6-acetyllysine. Ca(2+)-binding residues include D781 and E790. The residue at position 860 (K860) is an N6-acetyllysine. The residue at position 910 (S910) is a Phosphoserine.

Belongs to the alpha-actinin family. In terms of assembly, homodimer; antiparallel. Interacts with MAGI1. Interacts with PDLIM2. Identified in a complex with CASK, IQGAP1, MAGI2, NPHS1, SPTAN1 and SPTBN1. Identified in a IGF2BP1-dependent mRNP granule complex containing untranslated mRNAs. Component of the CART complex, at least composed of ACTN4, HGS/HRS, MYO5B and TRIM3. Binds TRIM3 at the N-terminus. Interacts with MICALL2 (preferentially in opened conformation); stimulated by RAB13 activation. Interacts with PPARG and RARA. Binds to VCL; this interaction triggers VCL conformational changes. Interacts with SEPTIN14. Interacts with IGSF8.

It is found in the nucleus. It localises to the cytoplasm. Its subcellular location is the cell junction. The protein localises to the cytoskeleton. The protein resides in the stress fiber. It is found in the perinuclear region. In terms of biological role, F-actin cross-linking protein which is thought to anchor actin to a variety of intracellular structures. This is a bundling protein. Probably involved in vesicular trafficking via its association with the CART complex. The CART complex is necessary for efficient transferrin receptor recycling but not for EGFR degradation. Involved in tight junction assembly in epithelial cells probably through interaction with MICALL2. Links MICALL2 to the actin cytoskeleton and recruits it to the tight junctions. May also function as a transcriptional coactivator, stimulating transcription mediated by the nuclear hormone receptors PPARG and RARA. Association with IGSF8 regulates the immune synapse formation and is required for efficient T-cell activation. This Mus musculus (Mouse) protein is Alpha-actinin-4.